Here is a 425-residue protein sequence, read N- to C-terminus: MIDINLIREKPDYVKERLATRDKELVSLVDKVLELDKRRREIIKRLEALRSERNKLSKEIGKLKREGKDTTEIQNRVKELKEEIDRLEEELRKVEEELKNTLLWIPNLPHPSVPVGEDEKDNVEVRRWGEPRKFDFEPKPHWEIGERLGILDFKRGAKLSGSRFTVIAGWGARLERALINFMLDLHTKKGYKEICPPHLVKPEILIGTGQLPKFEEDLYKCERDNLYLIPTAEVPLTNLYREEILKEENLPIYLTAYTPCYRREAGAYGKDIRGIIRQHQFDKVELVKIVHPDTSYDELEKLVKDAEEVLQLLGLPYRVVELCTGDLGFSAAKTYDIEVWFPSQNKYREISSCSNCEDFQARRMNTRFKDSKTGKNRFVHTLNGSGLAVGRTLAAILENYQQEDGSVVVPEVLRDYVGTDVIRPE.

An L-serine-binding site is contributed by threonine 231–glutamate 233. An ATP-binding site is contributed by arginine 262–glutamate 264. Position 285 (glutamate 285) interacts with L-serine. An ATP-binding site is contributed by glutamate 349 to serine 352. Serine 385 serves as a coordination point for L-serine.

Belongs to the class-II aminoacyl-tRNA synthetase family. Type-1 seryl-tRNA synthetase subfamily. Homodimer. The tRNA molecule binds across the dimer.

It localises to the cytoplasm. The catalysed reaction is tRNA(Ser) + L-serine + ATP = L-seryl-tRNA(Ser) + AMP + diphosphate + H(+). It carries out the reaction tRNA(Sec) + L-serine + ATP = L-seryl-tRNA(Sec) + AMP + diphosphate + H(+). Its pathway is aminoacyl-tRNA biosynthesis; selenocysteinyl-tRNA(Sec) biosynthesis; L-seryl-tRNA(Sec) from L-serine and tRNA(Sec): step 1/1. Catalyzes the attachment of serine to tRNA(Ser). Is also able to aminoacylate tRNA(Sec) with serine, to form the misacylated tRNA L-seryl-tRNA(Sec), which will be further converted into selenocysteinyl-tRNA(Sec). The protein is Serine--tRNA ligase of Aquifex aeolicus (strain VF5).